The chain runs to 79 residues: Conotoxin Vi6.1 (79 aa).

The first 22 residues, 1 to 22, serve as a signal peptide directing secretion; it reads MKLTCVLIITVLFLTASQLITA. The propeptide occupies 23–47; it reads DYSRDQRQYRAVRLGDEMRNFKGAR. Disulfide bonds link Cys49–Cys62, Cys56–Cys67, and Cys61–Cys77. 4-hydroxyproline is present on residues Pro60 and Pro63.

Expressed by the venom duct.

Its subcellular location is the secreted. Its function is as follows. Ion channel inhibitor that inhibits the increase in intracellular calcium upon depolarization in DRG neurons. In vivo, both intraperitoneal and intracranial injections into mice induce hyperactivity. In Conus virgo (Virgin cone), this protein is Conotoxin Vi6.1.